The chain runs to 276 residues: Mitochondrial outer membrane protein porin 2 (276 aa).

Phosphoserine is present on Ser76. The residue at position 236 (Thr236) is a Phosphothreonine.

The protein belongs to the eukaryotic mitochondrial porin (TC 1.B.8.1) family. Expressed in root tips, steles, leaves, sepals, petals, stamen and pistils.

The protein resides in the mitochondrion outer membrane. Its function is as follows. Forms a channel through the mitochondrial outer membrane that allows diffusion of small hydrophilic molecules. The channel adopts an open conformation at low or zero membrane potential and a closed conformation at potentials above 30-40 mV. The open state has a weak anion selectivity whereas the closed state is cation-selective. Involved in plant growth and development at the vegetative and reproductive stages. Is important for leaf and pollen development and mitochondrial membrane potential steady state. May be involved in ABA-mediated early seedling development and disease resistance. In Arabidopsis thaliana (Mouse-ear cress), this protein is Mitochondrial outer membrane protein porin 2 (VDAC2).